The primary structure comprises 132 residues: Large ribosomal subunit protein bL21 (132 aa).

A disordered region spans residues 111 to 132 (AAEKPARKPRAKKTNEVTTDGA).

It belongs to the bacterial ribosomal protein bL21 family. In terms of assembly, part of the 50S ribosomal subunit. Contacts protein L20.

This protein binds to 23S rRNA in the presence of protein L20. The chain is Large ribosomal subunit protein bL21 from Dehalococcoides mccartyi (strain CBDB1).